The chain runs to 323 residues: MRRAIVRGTGHYLPERVVENSWFEDKLDTSDEWIRARTGIERRHFAAEDQRTSDLGILAAQAALADAGLEAAQIDAVIVATSTPDLTFPSVATMVQAGLGMRHGFAYDLQAVCAGFVYALANADALIRAGLADRVLLIGAETFSRIMDWTDRGTCVLFGDGAGAVVLEAAEGQGSSADRGILATDLNSDGQYRDLLYVDGGVASTGTAGHLRMQGNLVFRHAVEKLADTAHRALDRAGLTPDQVDWLVPHQANLRIIEATAKRMHLPMEKVVLTVADHGNTSAASIPLALSVANAEGRFKPGDLLVAEAIGGGLAWGSVVLRW.

Catalysis depends on residues cysteine 113 and histidine 250. The interval 251-255 (QANLR) is ACP-binding. Asparagine 280 is a catalytic residue.

It belongs to the thiolase-like superfamily. FabH family. Homodimer.

It is found in the cytoplasm. The enzyme catalyses malonyl-[ACP] + acetyl-CoA + H(+) = 3-oxobutanoyl-[ACP] + CO2 + CoA. It participates in lipid metabolism; fatty acid biosynthesis. In terms of biological role, catalyzes the condensation reaction of fatty acid synthesis by the addition to an acyl acceptor of two carbons from malonyl-ACP. Catalyzes the first condensation reaction which initiates fatty acid synthesis and may therefore play a role in governing the total rate of fatty acid production. Possesses both acetoacetyl-ACP synthase and acetyl transacylase activities. Its substrate specificity determines the biosynthesis of branched-chain and/or straight-chain of fatty acids. The polypeptide is Beta-ketoacyl-[acyl-carrier-protein] synthase III (Paracoccus denitrificans (strain Pd 1222)).